We begin with the raw amino-acid sequence, 512 residues long: Glutathione-binding protein GsiB (512 aa).

Residues 1–26 form the signal peptide; sequence MARAVHRSGLVALGIATALMASCAFA.

It belongs to the bacterial solute-binding protein 5 family. The complex is composed of two ATP-binding proteins (GsiA), two transmembrane proteins (GsiC and GsiD) and a solute-binding protein (GsiB).

It is found in the periplasm. Part of the ABC transporter complex GsiABCD involved in glutathione import. Binds glutathione. The sequence is that of Glutathione-binding protein GsiB from Escherichia coli O6:K15:H31 (strain 536 / UPEC).